The chain runs to 2205 residues: Kinesin-related protein 1 (2205 aa).

The Kinesin motor domain occupies Asn2–Ile355. An ATP-binding site is contributed by Gly102–Ser109. A coiled-coil region spans residues Asn362–Met448. The region spanning Thr483–Gly595 is the FHA domain. Low complexity predominate over residues Phe525–Lys548. Disordered regions lie at residues Phe525–Leu568, Ser971–Asn993, Asp1084–Ala1226, and Thr1455–Val1508. The segment covering Pro549–Leu568 has biased composition (basic and acidic residues). Composition is skewed to low complexity over residues Thr978–Ser991, Ser1089–Ser1103, and Thr1117–Pro1142. Residues Tyr1143–Leu1164 show a composition bias toward polar residues. Low complexity-rich tracts occupy residues Ser1169–Ala1226 and Thr1455–Ser1492. The 94-residue stretch at Glu1523 to Lys1616 folds into the PH domain. Coiled coils occupy residues Lys1879–Ala1918, Ser1946–Ala2034, and Ala2075–Tyr2149.

Belongs to the TRAFAC class myosin-kinesin ATPase superfamily. Kinesin family. Unc-104 subfamily. As to quaternary structure, homodimer.

The protein localises to the cytoplasm. It localises to the cytoskeleton. The protein resides in the cytoplasmic vesicle membrane. Microtubule-associated force-producing protein that plays a role in organelle transport. Its motor activity is directed toward the microtubule's plus end. Transports cytoplasmic vesicles and particularly phosphatidylinositol 4,5-bisphosphate-containing liposomes along microtubules. The sequence is that of Kinesin-related protein 1 (kif1) from Dictyostelium discoideum (Social amoeba).